A 344-amino-acid polypeptide reads, in one-letter code: Heat-inducible transcription repressor HrcA (344 aa).

This sequence belongs to the HrcA family.

Functionally, negative regulator of class I heat shock genes (grpE-dnaK-dnaJ and groELS operons). Prevents heat-shock induction of these operons. The sequence is that of Heat-inducible transcription repressor HrcA from Streptococcus uberis (strain ATCC BAA-854 / 0140J).